A 237-amino-acid chain; its full sequence is Ribonuclease PH (237 aa).

Phosphate is bound by residues Arg86 and 124–126 (GTR).

This sequence belongs to the RNase PH family. In terms of assembly, homohexameric ring arranged as a trimer of dimers.

It catalyses the reaction tRNA(n+1) + phosphate = tRNA(n) + a ribonucleoside 5'-diphosphate. In terms of biological role, phosphorolytic 3'-5' exoribonuclease that plays an important role in tRNA 3'-end maturation. Removes nucleotide residues following the 3'-CCA terminus of tRNAs; can also add nucleotides to the ends of RNA molecules by using nucleoside diphosphates as substrates, but this may not be physiologically important. Probably plays a role in initiation of 16S rRNA degradation (leading to ribosome degradation) during starvation. The sequence is that of Ribonuclease PH from Shewanella sp. (strain W3-18-1).